We begin with the raw amino-acid sequence, 95 residues long: Secretoglobin family 2A member 1 (95 aa).

Positions 1-18 (MKLVFLFLLVTIPICCYA) are cleaved as a signal peptide. N-linked (GlcNAc...) asparagine glycosylation is found at N35 and N72.

Belongs to the secretoglobin family. Lipophilin subfamily. In terms of assembly, prostatein is composed of three different peptides called C1, C2 and C3. These form covalent C1:C3 (F) and C2:C3 (S) heterodimers whose non-covalent association forms tetrameric (C1:C3/C3:C2) prostatein molecules. In terms of tissue distribution, expressed at very low level in ventral prostate.

The protein resides in the secreted. Its function is as follows. Part of prostatein which is the major secretory glycoprotein of ventral prostate gland. Steroid-binding protein; can bind non-polar steroids, cholesterol and a group of small proline-rich peptides. The sequence is that of Secretoglobin family 2A member 1 from Rattus norvegicus (Rat).